Consider the following 259-residue polypeptide: Cobalt-precorrin-4 C(11)-methyltransferase (259 aa).

This sequence belongs to the precorrin methyltransferase family.

It catalyses the reaction Co-precorrin-4 + S-adenosyl-L-methionine = Co-precorrin-5A + S-adenosyl-L-homocysteine + H(+). Its pathway is cofactor biosynthesis; adenosylcobalamin biosynthesis; cob(II)yrinate a,c-diamide from sirohydrochlorin (anaerobic route): step 4/10. Its function is as follows. Catalyzes the methylation of C-11 in cobalt-precorrin-4 to form cobalt-precorrin-5A. The protein is Cobalt-precorrin-4 C(11)-methyltransferase (cbiF) of Methanocaldococcus jannaschii (strain ATCC 43067 / DSM 2661 / JAL-1 / JCM 10045 / NBRC 100440) (Methanococcus jannaschii).